A 443-amino-acid chain; its full sequence is Phosphoglucosamine mutase (443 aa).

The active-site Phosphoserine intermediate is the Ser101. Mg(2+)-binding residues include Ser101, Asp239, Asp241, and Asp243. Residue Ser101 is modified to Phosphoserine.

Belongs to the phosphohexose mutase family. It depends on Mg(2+) as a cofactor. Post-translationally, activated by phosphorylation.

The enzyme catalyses alpha-D-glucosamine 1-phosphate = D-glucosamine 6-phosphate. Catalyzes the conversion of glucosamine-6-phosphate to glucosamine-1-phosphate. The polypeptide is Phosphoglucosamine mutase (Francisella tularensis subsp. novicida (strain U112)).